Reading from the N-terminus, the 65-residue chain is Urease accessory protein UreI (65 aa).

In terms of biological role, probably facilitates nickel incorporation. May constitute a multicomponent high-affinity nickel transporter. Not essential for the expression of catalytically active urease. This is Urease accessory protein UreI (ureI) from Bacillus sp. (strain TB-90).